The sequence spans 117 residues: Large ribosomal subunit protein bL20 (117 aa).

Belongs to the bacterial ribosomal protein bL20 family.

Functionally, binds directly to 23S ribosomal RNA and is necessary for the in vitro assembly process of the 50S ribosomal subunit. It is not involved in the protein synthesizing functions of that subunit. This is Large ribosomal subunit protein bL20 from Rickettsia africae (strain ESF-5).